The sequence spans 282 residues: Phosphatidylserine decarboxylase proenzyme (282 aa).

Active-site charge relay system; for autoendoproteolytic cleavage activity residues include Asp-88, His-144, and Ser-247. Ser-247 serves as the catalytic Schiff-base intermediate with substrate; via pyruvic acid; for decarboxylase activity. Ser-247 is modified (pyruvic acid (Ser); by autocatalysis).

The protein belongs to the phosphatidylserine decarboxylase family. PSD-B subfamily. Prokaryotic type I sub-subfamily. Heterodimer of a large membrane-associated beta subunit and a small pyruvoyl-containing alpha subunit. Pyruvate serves as cofactor. Is synthesized initially as an inactive proenzyme. Formation of the active enzyme involves a self-maturation process in which the active site pyruvoyl group is generated from an internal serine residue via an autocatalytic post-translational modification. Two non-identical subunits are generated from the proenzyme in this reaction, and the pyruvate is formed at the N-terminus of the alpha chain, which is derived from the carboxyl end of the proenzyme. The autoendoproteolytic cleavage occurs by a canonical serine protease mechanism, in which the side chain hydroxyl group of the serine supplies its oxygen atom to form the C-terminus of the beta chain, while the remainder of the serine residue undergoes an oxidative deamination to produce ammonia and the pyruvoyl prosthetic group on the alpha chain. During this reaction, the Ser that is part of the protease active site of the proenzyme becomes the pyruvoyl prosthetic group, which constitutes an essential element of the active site of the mature decarboxylase.

It localises to the cell membrane. It carries out the reaction a 1,2-diacyl-sn-glycero-3-phospho-L-serine + H(+) = a 1,2-diacyl-sn-glycero-3-phosphoethanolamine + CO2. The protein operates within phospholipid metabolism; phosphatidylethanolamine biosynthesis; phosphatidylethanolamine from CDP-diacylglycerol: step 2/2. Functionally, catalyzes the formation of phosphatidylethanolamine (PtdEtn) from phosphatidylserine (PtdSer). This chain is Phosphatidylserine decarboxylase proenzyme, found in Xanthomonas oryzae pv. oryzae (strain KACC10331 / KXO85).